Here is a 161-residue protein sequence, read N- to C-terminus: Nucleotide-binding protein Shewmr4_3156 (161 aa).

This sequence belongs to the YajQ family.

Nucleotide-binding protein. The polypeptide is Nucleotide-binding protein Shewmr4_3156 (Shewanella sp. (strain MR-4)).